Here is an 892-residue protein sequence, read N- to C-terminus: Alanine--tRNA ligase (892 aa).

4 residues coordinate Zn(2+): His-596, His-600, Cys-700, and His-704.

It belongs to the class-II aminoacyl-tRNA synthetase family. Requires Zn(2+) as cofactor.

The protein localises to the cytoplasm. The enzyme catalyses tRNA(Ala) + L-alanine + ATP = L-alanyl-tRNA(Ala) + AMP + diphosphate. Catalyzes the attachment of alanine to tRNA(Ala) in a two-step reaction: alanine is first activated by ATP to form Ala-AMP and then transferred to the acceptor end of tRNA(Ala). Also edits incorrectly charged Ser-tRNA(Ala) and Gly-tRNA(Ala) via its editing domain. This Methanococcus maripaludis (strain C5 / ATCC BAA-1333) protein is Alanine--tRNA ligase.